We begin with the raw amino-acid sequence, 185 residues long: Ribosome-recycling factor (185 aa).

This sequence belongs to the RRF family.

The protein resides in the cytoplasm. Its function is as follows. Responsible for the release of ribosomes from messenger RNA at the termination of protein biosynthesis. May increase the efficiency of translation by recycling ribosomes from one round of translation to another. This Streptococcus agalactiae serotype V (strain ATCC BAA-611 / 2603 V/R) protein is Ribosome-recycling factor.